We begin with the raw amino-acid sequence, 2313 residues long: Voltage-dependent R-type calcium channel subunit alpha-1E (2313 aa).

The disordered stretch occupies residues 1-38; sequence MARFGEAVVARPGSGDGDSDQSRNRQGTPVPASGQAAA. Residues 1 to 89 lie on the Cytoplasmic side of the membrane; the sequence is MARFGEAVVA…KYAKKLIDWP (89 aa). S14 and S19 each carry phosphoserine. An I repeat occupies 76-354; that stretch reads NIVRKYAKKL…LVLGVLSGEF (279 aa). Residues 90 to 108 traverse the membrane as a helical segment; sequence PFEYMILATIIANCIVLAL. Topologically, residues 109-127 are extracellular; that stretch reads EQHLPEDDKTPMSRRLEKT. Residues 128-146 traverse the membrane as a helical segment; the sequence is EPYFIGIFCFEAGIKIVAL. Residues 147 to 158 are Cytoplasmic-facing; the sequence is GFIFHKGSYLRN. Residues 159 to 173 traverse the membrane as a helical segment; that stretch reads GWNVMDFIVVLSGIL. Over 174 to 185 the chain is Extracellular; sequence ATAGTHFNTHVD. Residues 186 to 205 traverse the membrane as a helical segment; the sequence is LRTLRAVRVLRPLKLVSGIP. Topologically, residues 206–223 are cytoplasmic; that stretch reads SLQIVLKSIMKAMVPLLQ. Residues 224 to 244 traverse the membrane as a helical segment; that stretch reads IGLLLFFAILMFAIIGLEFYS. The Extracellular portion of the chain corresponds to 245–326; the sequence is GKLHRACFMN…NTNDALGATW (82 aa). N-linked (GlcNAc...) asparagine glycosylation is present at N254. A helical membrane pass occupies residues 327–350; the sequence is NWLYFIPLIIIGSFFVLNLVLGVL. Residues 351–476 are Cytoplasmic-facing; that stretch reads SGEFAKERER…ISIRHMVKSQ (126 aa). Residues 374 to 391 are binding to the beta subunit; sequence QQIERELNGYRAWIDKAE. D426 serves as a coordination point for Ca(2+). S427 bears the Phosphoserine mark. 3 residues coordinate Ca(2+): S428, E430, and C432. T440 is subject to Phosphothreonine. The stretch at 462–706 is one II repeat; sequence ERLLRISIRH…VFLAIAVDNL (245 aa). The helical transmembrane segment at 477-496 threads the bilayer; it reads VFYWIVLSLVALNTACVAIV. Over 497–509 the chain is Extracellular; the sequence is HHNQPQWLTHLLY. The helical transmembrane segment at 510 to 529 threads the bilayer; the sequence is YAEFLFLGLFLLEMSLKMYG. Over 530-538 the chain is Cytoplasmic; sequence MGPRLYFHS. The chain crosses the membrane as a helical span at residues 539-557; that stretch reads SFNCFDFGVTVGSIFEVVW. Residues 558-567 lie on the Extracellular side of the membrane; it reads AIFRPGTSFG. A helical membrane pass occupies residues 568 to 586; the sequence is ISVLRALRLLRIFKITKYW. Over 587 to 605 the chain is Cytoplasmic; it reads ASLRNLVVSLMSSMKSIIS. A helical transmembrane segment spans residues 606-625; it reads LLFLLFLFIVVFALLGMQLF. Topologically, residues 626-678 are extracellular; the sequence is GGRFNFNDGTPSANFDTFPAAIMTVFQILTGEDWNEVMYNGIRSQGGVSSGMW. A helical membrane pass occupies residues 679-703; the sequence is SAIYFIVLTLFGNYTLLNVFLAIAV. Topologically, residues 704-1148 are cytoplasmic; it reads DNLANAQELT…TNPIRRACHY (445 aa). Residues 729-774 are disordered; that stretch reads LQKAKEVSPMSAPNMPSIERDRRRRHHMSMWEPRSSHLRERRRRHH. Residues S736, S745, S793, S815, and S855 each carry the phosphoserine modification. The segment at 851 to 984 is disordered; the sequence is SRGGSLKGDG…EERAQDLRRT (134 aa). The segment covering 866-875 has biased composition (polar residues); the sequence is ALDNQRTPLS. Over residues 913–926 the composition is skewed to basic residues; that stretch reads RHRQSQRRSRHRRV. The span at 933–945 shows a compositional bias: low complexity; the sequence is SSSASRSRSASQE. S947 is subject to Phosphoserine. Residues 955 to 983 show a composition bias toward basic and acidic residues; the sequence is EGEKDHELRGNHGAKEPTIQEERAQDLRR. Position 1097 is a phosphoserine (S1097). The segment at 1103 to 1125 is disordered; it reads EIREDEEEVEKKKQKKEKRETGK. One copy of the III repeat lies at 1140–1426; it reads NPIRRACHYI…IFVALIIITF (287 aa). A helical membrane pass occupies residues 1149–1165; the sequence is IVNLRYFEMCILLVIAA. The Extracellular portion of the chain corresponds to 1166–1189; it reads SSIALAAEDPVLTNSERNKVLRYF. The helical transmembrane segment at 1190–1209 threads the bilayer; the sequence is DYVFTGVFTFEMVIKMIDQG. Topologically, residues 1210–1217 are cytoplasmic; it reads LILQDGSY. Residues 1218 to 1240 form a helical membrane-spanning segment; sequence FRDLWNILDFVVVVGALVAFALA. At 1241-1254 the chain is on the extracellular side; it reads NALGTNKGRDIKTI. Residues 1255 to 1272 traverse the membrane as a helical segment; that stretch reads KSLRVLRVLRPLKTIKRL. Residues 1273–1291 are Cytoplasmic-facing; sequence PKLKAVFDCVVTSLKNVFN. A helical transmembrane segment spans residues 1292–1311; it reads ILIVYKLFMFIFAVIAVQLF. Topologically, residues 1312 to 1398 are extracellular; sequence KGKFFYCTDS…RGPSRSNRME (87 aa). A helical membrane pass occupies residues 1399-1422; it reads MSIFYVVYFVVFPFFFVNIFVALI. Residues 1423–1479 lie on the Cytoplasmic side of the membrane; sequence IITFQEQGDKMMEECSLEKNERACIDFAISAKPLTRYMPQNRHTFQYRVWHFVVSPS. Residues 1463 to 1726 form an IV repeat; it reads NRHTFQYRVW…LFVAVIMDNF (264 aa). A helical transmembrane segment spans residues 1480–1498; that stretch reads FEYTIMAMIALNTVVLMMK. Over 1499 to 1513 the chain is Extracellular; that stretch reads YYSAPCTYELALKYL. A helical membrane pass occupies residues 1514 to 1533; that stretch reads NIAFTMVFSLECVLKVIAFG. The Cytoplasmic segment spans residues 1534 to 1541; it reads FLNYFRDT. A helical membrane pass occupies residues 1542-1560; the sequence is WNIFDFITVIGSITEIILT. The Extracellular segment spans residues 1561–1571; that stretch reads DSKLVNTSGFN. 2 N-linked (GlcNAc...) asparagine glycosylation sites follow: N1566 and N1571. Residues 1572 to 1590 traverse the membrane as a helical segment; that stretch reads MSFLKLFRAARLIKLLRQG. Residues 1591–1609 lie on the Cytoplasmic side of the membrane; the sequence is YTIRILLWTFVQSFKALPY. The chain crosses the membrane as a helical span at residues 1610-1629; sequence VCLLIAMLFFIYAIIGMQVF. The Extracellular portion of the chain corresponds to 1630–1698; sequence GNIKLDEESH…NENERCGTDL (69 aa). The chain crosses the membrane as a helical span at residues 1699–1724; sequence AYVYFVSFIFFCSFLMLNLFVAVIMD. The Cytoplasmic segment spans residues 1725–2313; it reads NFEYLTRDSS…LSDTEEDDKC (589 aa). Residues 1739 to 1774 enclose the EF-hand domain; that stretch reads HHLDEFVRVWAEYDRAACGRIHYTEMYEMLTLMSPP. D1752, R1758, and E1763 together coordinate Ca(2+). Disordered regions lie at residues 1970-2170, 2206-2225, and 2263-2295; these read VSEL…RPLL, CLTESSNSPHPQQSQHASPQ, and SNTIGSAPPLRHSWQMPNGHYRRRRRGGPGPGM. Positions 2012–2023 are enriched in polar residues; the sequence is TDPSSMRRSFST. Residues 2055-2064 show a composition bias toward low complexity; it reads HSSLRLSAHR. The segment covering 2065–2085 has biased composition (basic and acidic residues); the sequence is LNSDSGHKSDTHRSGGRERGR. A phosphoserine mark is found at S2094 and S2113. A compositionally biased stretch (basic and acidic residues) spans 2101–2118; it reads NSEERGTQADWESPERRQ. Residues 2129–2152 show a composition bias toward polar residues; the sequence is TPNRQGTGSLSESSIPSVSDTSTP. The segment covering 2210 to 2225 has biased composition (low complexity); that stretch reads SSNSPHPQQSQHASPQ.

The protein belongs to the calcium channel alpha-1 subunit (TC 1.A.1.11) family. CACNA1E subfamily. As to quaternary structure, interacts with EFHC1. Voltage-dependent calcium channels are multisubunit complexes, consisting of alpha-1, alpha-2, beta and delta subunits in a 1:1:1:1 ratio. The channel activity is directed by the pore-forming and voltage-sensitive alpha-1 subunit. In many cases, this subunit is sufficient to generate voltage-sensitive calcium channel activity. The auxiliary subunits beta and alpha-2/delta linked by a disulfide bridge regulate the channel activity. In terms of tissue distribution, expressed in neuronal tissues and in kidney.

It localises to the membrane. The catalysed reaction is Ca(2+)(in) = Ca(2+)(out). In terms of biological role, voltage-sensitive calcium channels (VSCC) mediate the entry of calcium ions into excitable cells. They are also involved in a variety of calcium-dependent processes, including muscle contraction, hormone or neurotransmitter release, gene expression, cell motility, cell division and cell death. The isoform alpha-1E gives rise to R-type calcium currents. R-type calcium channels belong to the 'high-voltage activated' (HVA) group and are blocked by nickel. They are however insensitive to dihydropyridines (DHP). Calcium channels containing alpha-1E subunit could be involved in the modulation of firing patterns of neurons which is important for information processing. Functionally, voltage-sensitive calcium channels (VSCC) mediate the entry of calcium ions into excitable cells. They are also involved in a variety of calcium-dependent processes, including muscle contraction, hormone or neurotransmitter release, gene expression, cell motility, cell division and cell death. The isoform alpha-1E gives rise to R-type calcium currents. The chain is Voltage-dependent R-type calcium channel subunit alpha-1E (CACNA1E) from Homo sapiens (Human).